The sequence spans 144 residues: Large ribosomal subunit protein uL15 (144 aa).

The segment covering 1–13 has biased composition (basic and acidic residues); sequence MKLNELKPAEGSR. Positions 1-47 are disordered; sequence MKLNELKPAEGSRKVRNRVGRGDSSGNGKTAGRGQKGQKARSKTRLG. A compositionally biased stretch (gly residues) spans 23 to 35; that stretch reads DSSGNGKTAGRGQ.

Belongs to the universal ribosomal protein uL15 family. As to quaternary structure, part of the 50S ribosomal subunit.

Binds to the 23S rRNA. The sequence is that of Large ribosomal subunit protein uL15 from Levilactobacillus brevis (strain ATCC 367 / BCRC 12310 / CIP 105137 / JCM 1170 / LMG 11437 / NCIMB 947 / NCTC 947) (Lactobacillus brevis).